The primary structure comprises 402 residues: Type II NADH:quinone oxidoreductase (402 aa).

FAD-binding positions include 12-16 (GAGYA), 39-40 (NK), and valine 83. The active site involves glutamate 172. Residues aspartate 302, 319–320 (AQ), and lysine 379 contribute to the FAD site.

Belongs to the NADH dehydrogenase family. FAD is required as a cofactor.

The protein resides in the cell membrane. The catalysed reaction is a quinone + NADH + H(+) = a quinol + NAD(+). Functionally, alternative, nonproton pumping NADH:quinone oxidoreductase that delivers electrons to the respiratory chain by oxidation of NADH and reduction of quinones, and contributes to the regeneration of NAD(+). The sequence is that of Type II NADH:quinone oxidoreductase from Staphylococcus aureus (strain MSSA476).